The following is a 153-amino-acid chain: Protein ripply2.2 (153 aa).

The WRPW motif; required for transcriptional repression and interaction with tle4 signature appears at 58 to 61 (WRPW). Residues 93 to 128 (HPVRLFWPKSKLLDNTYQEAADLLRNFPVQATISLY) form a ripply homology domain region. Residues 127–153 (LYNDSESDTDNEEDSSEEEQDSGFESE) form a disordered region. Residues 131–153 (SESDTDNEEDSSEEEQDSGFESE) are compositionally biased toward acidic residues.

Belongs to the ripply family. As to quaternary structure, interacts with tle4 and tbx6, and mediates interaction between these proteins. Expressed in the presomitic mesoderm (PSM) in the anterior halves of somitomeres S-I, S-II and S-III.

The protein resides in the nucleus. Its function is as follows. Required during somitogenesis for the formation of somite boundaries. Represses the expression of genes involved in somite segmentation by acting with the corepressor tle4 to down-regulate the transcriptional activity of tbx6. May act by regulating the activity of tle4. Represses transcription of delta2, thy1 and ripply2.2/bowline itself. The protein is Protein ripply2.2 (ripply2.2) of Xenopus laevis (African clawed frog).